Reading from the N-terminus, the 559-residue chain is Inositol-3-phosphate synthase 1 (559 aa).

NAD(+) is bound by residues G67, G68, N69, N70, D141, S177, V178, Q188, R191, T228, A229, N230, T231, G278, S279, D303, S306, N337, N338, D339, and K352. At S279 the chain carries Phosphoserine. S357 carries the phosphoserine modification. NAD(+) contacts are provided by G390, D391, D419, and S420.

The protein belongs to the myo-inositol 1-phosphate synthase family. Requires NAD(+) as cofactor.

The protein localises to the cytoplasm. The enzyme catalyses D-glucose 6-phosphate = 1D-myo-inositol 3-phosphate. Its pathway is polyol metabolism; myo-inositol biosynthesis; myo-inositol from D-glucose 6-phosphate: step 1/2. Its function is as follows. Key enzyme in myo-inositol biosynthesis pathway that catalyzes the conversion of glucose 6-phosphate to 1-myo-inositol 1-phosphate in a NAD-dependent manner. Rate-limiting enzyme in the synthesis of all inositol-containing compounds. The polypeptide is Inositol-3-phosphate synthase 1 (ISYNA1) (Macaca fascicularis (Crab-eating macaque)).